Here is a 91-residue protein sequence, read N- to C-terminus: Insertion element IS1 7 protein InsA (91 aa).

This sequence belongs to the IS1 elements InsA family.

Absolutely required for transposition of IS1. This is Insertion element IS1 7 protein InsA (insA7) from Escherichia coli (strain K12).